Here is a 1758-residue protein sequence, read N- to C-terminus: Condensin-2 complex subunit hcp-6 (1758 aa).

Disordered stretches follow at residues 428–501, 969–1008, 1379–1460, and 1500–1656; these read DPGA…KAKE, ENGS…KGGM, QKRL…ARLL, and SKQA…LSRG. Residues 438–462 are compositionally biased toward acidic residues; it reads EQNEEEDEEEEGEDEEEEEENEQDD. A compositionally biased stretch (basic and acidic residues) spans 463 to 473; that stretch reads VAVKEEEQSDK. The segment covering 474–484 has biased composition (acidic residues); the sequence is SDEENDGDNEE. Basic and acidic residues predominate over residues 485–501; sequence NVSKKKEEKKKEKKAKE. Residues 969-979 are compositionally biased toward polar residues; it reads ENGSSDASTVN. Over residues 999–1008 the composition is skewed to low complexity; the sequence is SSQKSSKGGM. A coiled-coil region spans residues 1326–1385; that stretch reads CIEHKNDIDEILQDNRQLKDEMMFELQRVKQRTEEANRILDEYLKRVAEFKKQQKRLSKS. Acidic residues predominate over residues 1414-1423; sequence EDQENVEEEV. Basic and acidic residues-rich tracts occupy residues 1424–1437 and 1500–1512; these read EMRT…DADV and SKQA…KTIV. 2 stretches are compositionally biased toward polar residues: residues 1602–1618 and 1640–1651; these read ISAN…QSTE and VPTSSSGNTEND.

In terms of assembly, component of the condensin-2 complex.

It localises to the nucleus. The protein resides in the chromosome. The protein localises to the centromere. Its function is as follows. Chromosomal protein which is recruited to mitotic chromosomes by hcp-3 (CENP-A) and hcp-4 (CENP-C). Involved in chromosome segregation during mitosis, playing a role in chromosome condensation and in maintaining chromosome morphology, rigidity and orientation during mitosis. The protein is Condensin-2 complex subunit hcp-6 of Caenorhabditis elegans.